A 143-amino-acid polypeptide reads, in one-letter code: Cytochrome c-type biogenesis protein CcmE (143 aa).

Topologically, residues 1–8 are cytoplasmic; it reads MTPVRRRK. Residues 9–29 traverse the membrane as a helical; Signal-anchor for type II membrane protein segment; sequence LFILLFALSVLSAAAALVLYA. The Periplasmic segment spans residues 30–143; sequence LRQNISLFYT…KSALADKVKQ (114 aa). His-124 and Tyr-128 together coordinate heme.

The protein belongs to the CcmE/CycJ family.

The protein localises to the cell inner membrane. Heme chaperone required for the biogenesis of c-type cytochromes. Transiently binds heme delivered by CcmC and transfers the heme to apo-cytochromes in a process facilitated by CcmF and CcmH. This Legionella pneumophila (strain Lens) protein is Cytochrome c-type biogenesis protein CcmE.